The primary structure comprises 291 residues: Prepilin leader peptidase/N-methyltransferase (291 aa).

A helical membrane pass occupies residues 14–34 (LYFSLVFLFSLMIGSFLNVVI). Positions 75, 78, 100, and 103 each coordinate Zn(2+). 6 helical membrane passes run 107-127 (ISAR…VVAM), 131-151 (PGWG…LTFI), 162-182 (LTLP…YVPL), 186-206 (VIGA…FKLL), 232-252 (LPIV…GLIL), and 262-282 (IPFG…GDSI).

This sequence belongs to the peptidase A24 family. The cofactor is Zn(2+).

It is found in the cell inner membrane. It catalyses the reaction Typically cleaves a -Gly-|-Phe- bond to release an N-terminal, basic peptide of 5-8 residues from type IV prepilin, and then N-methylates the new N-terminal amino group, the methyl donor being S-adenosyl-L-methionine.. Functionally, plays an essential role in type IV pili and type II pseudopili formation by proteolytically removing the leader sequence from substrate proteins and subsequently monomethylating the alpha-amino group of the newly exposed N-terminal phenylalanine. The protein is Prepilin leader peptidase/N-methyltransferase (tapD) of Aeromonas salmonicida (strain A449).